A 172-amino-acid chain; its full sequence is C-phycocyanin beta subunit (172 aa).

Position 72 is an N4-methylasparagine (asparagine 72). Cysteine 82 and cysteine 153 together coordinate (2R,3E)-phycocyanobilin.

It belongs to the phycobiliprotein family. As to quaternary structure, heterodimer of an alpha and a beta subunit, which further assembles into trimers and the trimers into hexamers. Post-translationally, contains two covalently linked bilin chromophores.

Its subcellular location is the cellular thylakoid membrane. In terms of biological role, light-harvesting photosynthetic bile pigment-protein from the phycobiliprotein complex (phycobilisome, PBS). Phycocyanin is the major phycobiliprotein in the PBS rod. The polypeptide is C-phycocyanin beta subunit (cpcB) (Synechocystis sp. (strain PCC 6701)).